The following is a 72-amino-acid chain: Large ribosomal subunit protein bL31 (72 aa).

Cys16, Cys18, Cys38, and Cys41 together coordinate Zn(2+).

The protein belongs to the bacterial ribosomal protein bL31 family. Type A subfamily. As to quaternary structure, part of the 50S ribosomal subunit. It depends on Zn(2+) as a cofactor.

In terms of biological role, binds the 23S rRNA. The sequence is that of Large ribosomal subunit protein bL31 from Aliivibrio fischeri (strain ATCC 700601 / ES114) (Vibrio fischeri).